The sequence spans 512 residues: GMP synthase [glutamine-hydrolyzing] (512 aa).

One can recognise a Glutamine amidotransferase type-1 domain in the interval 7-197; that stretch reads TIIVLDFGSQ…VFGVCGCSEG (191 aa). Cys-84 serves as the catalytic Nucleophile. Catalysis depends on residues His-171 and Glu-173. Positions 198 to 387 constitute a GMPS ATP-PPase domain; the sequence is WNMENFIEVE…LGIPDEIVWR (190 aa). 225–231 is an ATP binding site; that stretch reads SGGVDSS.

As to quaternary structure, homodimer.

It carries out the reaction XMP + L-glutamine + ATP + H2O = GMP + L-glutamate + AMP + diphosphate + 2 H(+). It functions in the pathway purine metabolism; GMP biosynthesis; GMP from XMP (L-Gln route): step 1/1. Functionally, catalyzes the synthesis of GMP from XMP. This chain is GMP synthase [glutamine-hydrolyzing], found in Bacillus cereus (strain G9842).